A 340-amino-acid polypeptide reads, in one-letter code: DNA repair protein RAD51 homolog B (340 aa).

The tract at residues methionine 1–glycine 22 is disordered. A HhH domain is found at threonine 49–alanine 78. Residue glycine 128 to threonine 135 coordinates ATP.

Belongs to the RecA family. RAD51 subfamily. As to quaternary structure, self-associates and may interact with XRCC3 homolog. As to expression, highly expressed in mitotic and meiotic tissues, but low levels in differentiated tissues.

It is found in the nucleus. Functionally, binds to single and double-stranded DNA and exhibits DNA-dependent ATPase activity. Unwinds duplex DNA. Component of the meiotic recombination pathway. Seems to play a role in mediating chromosome homology search, chromosome pairing and synapsis at early stages and probably chromosome crossing-over at later stages in meiosis. Probably is involved in the repair of meiotic double strand breaks (DBSs) and in homologous recombination. The polypeptide is DNA repair protein RAD51 homolog B (RAD51B) (Zea mays (Maize)).